Reading from the N-terminus, the 84-residue chain is Large ribosomal subunit protein bL27 (84 aa).

The segment at 1–22 (MAHKKAGGSTRNGRDSESKRLG) is disordered.

The protein belongs to the bacterial ribosomal protein bL27 family.

This is Large ribosomal subunit protein bL27 from Shewanella sp. (strain MR-4).